Reading from the N-terminus, the 79-residue chain is Putative defensin-like protein 146 (79 aa).

A signal peptide spans 1–25 (MMKNQFQLSLIILTFFILLELGVMG). 4 disulfide bridges follow: Cys35–Cys78, Cys46–Cys66, Cys51–Cys72, and Cys55–Cys74.

Belongs to the DEFL family.

The protein localises to the secreted. The sequence is that of Putative defensin-like protein 146 (LCR9) from Arabidopsis thaliana (Mouse-ear cress).